Reading from the N-terminus, the 453-residue chain is Acyl-coenzyme A thioesterase 2, mitochondrial (453 aa).

A mitochondrion-targeting transit peptide spans 1-42; that stretch reads MVASSFAVLRASRLCQQDWKSWARLFVPPPLSTGGRTTWART. At lysine 83 the chain carries N6-acetyllysine. Active-site charge relay system residues include serine 273, aspartate 365, and histidine 399. At lysine 447 the chain carries N6-succinyllysine.

It belongs to the C/M/P thioester hydrolase family. Monomer. As to expression, highly expressed in brown and white adipose tissue, muscle, heart, kidney, lung, adrenal gland and spleen; weakly expressed in intestine, testis and brain.

The protein resides in the mitochondrion matrix. The enzyme catalyses hexadecanoyl-CoA + H2O = hexadecanoate + CoA + H(+). The catalysed reaction is tetradecanoyl-CoA + H2O = tetradecanoate + CoA + H(+). It carries out the reaction octadecanoyl-CoA + H2O = octadecanoate + CoA + H(+). It catalyses the reaction eicosanoyl-CoA + H2O = eicosanoate + CoA + H(+). The enzyme catalyses decanoyl-CoA + H2O = decanoate + CoA + H(+). The catalysed reaction is dodecanoyl-CoA + H2O = dodecanoate + CoA + H(+). It carries out the reaction (9Z)-octadecenoyl-CoA + H2O = (9Z)-octadecenoate + CoA + H(+). It catalyses the reaction (9Z)-hexadecenoyl-CoA + H2O = (9Z)-hexadecenoate + CoA + H(+). The enzyme catalyses (9E)-octadecenoyl-CoA + H2O = (9E)-octadecenoate + CoA + H(+). The catalysed reaction is (9Z,12Z)-octadecadienoyl-CoA + H2O = (9Z,12Z)-octadecadienoate + CoA + H(+). It participates in lipid metabolism; fatty acid metabolism. Its function is as follows. Catalyzes the hydrolysis of acyl-CoAs into free fatty acids and coenzyme A (CoASH), regulating their respective intracellular levels. Displays higher activity toward long chain acyl CoAs (C14-C20). The enzyme is involved in enhancing the hepatic fatty acid oxidation in mitochondria. This Mus musculus (Mouse) protein is Acyl-coenzyme A thioesterase 2, mitochondrial (Acot2).